We begin with the raw amino-acid sequence, 129 residues long: Phosphoribosyl-AMP cyclohydrolase (129 aa).

Position 76 (Asp76) interacts with Mg(2+). Cys77 is a Zn(2+) binding site. Positions 78 and 80 each coordinate Mg(2+). 2 residues coordinate Zn(2+): Cys97 and Cys104.

This sequence belongs to the PRA-CH family. As to quaternary structure, homodimer. Requires Mg(2+) as cofactor. Zn(2+) is required as a cofactor.

The protein localises to the cytoplasm. It carries out the reaction 1-(5-phospho-beta-D-ribosyl)-5'-AMP + H2O = 1-(5-phospho-beta-D-ribosyl)-5-[(5-phospho-beta-D-ribosylamino)methylideneamino]imidazole-4-carboxamide. It functions in the pathway amino-acid biosynthesis; L-histidine biosynthesis; L-histidine from 5-phospho-alpha-D-ribose 1-diphosphate: step 3/9. Catalyzes the hydrolysis of the adenine ring of phosphoribosyl-AMP. This Polaromonas naphthalenivorans (strain CJ2) protein is Phosphoribosyl-AMP cyclohydrolase.